Here is a 131-residue protein sequence, read N- to C-terminus: Urease subunit beta (131 aa).

The tract at residues Pro-100 to Ala-131 is disordered.

The protein belongs to the urease beta subunit family. Heterotrimer of UreA (gamma), UreB (beta) and UreC (alpha) subunits. Three heterotrimers associate to form the active enzyme.

It localises to the cytoplasm. The enzyme catalyses urea + 2 H2O + H(+) = hydrogencarbonate + 2 NH4(+). It participates in nitrogen metabolism; urea degradation; CO(2) and NH(3) from urea (urease route): step 1/1. This is Urease subunit beta from Kocuria rhizophila (strain ATCC 9341 / DSM 348 / NBRC 103217 / DC2201).